The chain runs to 252 residues: Phosphomannomutase (252 aa).

Residue Asp-13 is the Nucleophile of the active site. Residues Asp-13 and Asp-15 each coordinate Mg(2+). Catalysis depends on Asp-15, which acts as the Proton donor/acceptor. Alpha-D-mannose 1-phosphate is bound by residues Arg-22, Arg-124, Arg-135, Arg-142, Ser-180, and Asp-182. Positions 208, 220, and 225 each coordinate Mg(2+).

It belongs to the eukaryotic PMM family. In terms of assembly, homodimer. Mg(2+) is required as a cofactor. In terms of tissue distribution, expressed in roots, stems, leaves, flowers and immature fruits.

It is found in the cytoplasm. It catalyses the reaction alpha-D-mannose 1-phosphate = D-mannose 6-phosphate. The protein operates within nucleotide-sugar biosynthesis; GDP-alpha-D-mannose biosynthesis; alpha-D-mannose 1-phosphate from D-fructose 6-phosphate: step 2/2. In terms of biological role, catalyzes the interconversion of mannose-6-phosphate to mannose-1-phosphate, the precursor for the synthesis of GDP-mannose. GDP-mannose is an essential sugar nucleotide for the synthesis of D-mannose-containing cell wall polysaccharides (galactomannans and glucomannans), glycolipids, glycoproteins and the antioxidant L-ascorbate. Can complement the yeast temperature-sensitive mutant sec53-6. The protein is Phosphomannomutase of Nicotiana benthamiana.